The following is a 144-amino-acid chain: Large ribosomal subunit protein uL15 (144 aa).

Residues 1–52 (MRLNSLSPAEGAKHSAKRLGRGIGSGLGKTGGRGHKGQKSRTGGGVRRGFEG) form a disordered region. The span at 21-31 (RGIGSGLGKTG) shows a compositional bias: gly residues.

It belongs to the universal ribosomal protein uL15 family. Part of the 50S ribosomal subunit.

Functionally, binds to the 23S rRNA. The polypeptide is Large ribosomal subunit protein uL15 (Haemophilus ducreyi (strain 35000HP / ATCC 700724)).